Consider the following 318-residue polypeptide: Ubiquitin-like domain-containing CTD phosphatase 1 (318 aa).

Ala2 carries the post-translational modification N-acetylalanine. Residues 3-81 (LPIIVKWGGQ…IMMMGTREES (79 aa)) enclose the Ubiquitin-like domain. Lys117 is subject to N6-acetyllysine. The region spanning 133–294 (PREGKKLLVL…LKLTQYLKEI (162 aa)) is the FCP1 homology domain. Mg(2+) is bound by residues Asp143, Asp145, and Asp253.

The cofactor is Mg(2+).

The protein localises to the nucleus. The enzyme catalyses O-phospho-L-seryl-[protein] + H2O = L-seryl-[protein] + phosphate. The catalysed reaction is O-phospho-L-threonyl-[protein] + H2O = L-threonyl-[protein] + phosphate. Dephosphorylates 26S nuclear proteasomes, thereby decreasing their proteolytic activity. Recruited to the 19S regulatory particle of the 26S proteasome through its interaction with 19S component PSMD2/RPN1. Once recruited, dephosphorylates 19S component PSMC2/RPT1 which impairs PSMC2 ATPase activity and disrupts 26S proteasome assembly. Has also been reported to stimulate the proteolytic activity of the 26S proteasome. The polypeptide is Ubiquitin-like domain-containing CTD phosphatase 1 (UBLCP1) (Pongo abelii (Sumatran orangutan)).